Reading from the N-terminus, the 480-residue chain is Probable pectin lyase F-2 (480 aa).

The first 25 residues, 1–25, serve as a signal peptide directing secretion; sequence MTLIRTVLMAAALLGASAHAQGVVG. A disulfide bridge connects residues Cys-83 and Cys-106. N-linked (GlcNAc...) asparagine glycosylation is present at Asn-111. Residue Arg-256 is part of the active site. Residues Cys-322 and Cys-330 are joined by a disulfide bond. Positions 386–401 are enriched in low complexity; that stretch reads SSSAIPSSTPAPSSSA. The tract at residues 386–436 is disordered; it reads SSSAIPSSTPAPSSSALAKRHGGHDRHGLGHIPHLTEGGPGAWHTPGPAPS.

Belongs to the polysaccharide lyase 1 family.

It localises to the secreted. It catalyses the reaction Eliminative cleavage of (1-&gt;4)-alpha-D-galacturonan methyl ester to give oligosaccharides with 4-deoxy-6-O-methyl-alpha-D-galact-4-enuronosyl groups at their non-reducing ends.. Functionally, pectinolytic enzymes consist of four classes of enzymes: pectin lyase, polygalacturonase, pectin methylesterase and rhamnogalacturonase. Among pectinolytic enzymes, pectin lyase is the most important in depolymerization of pectin, since it cleaves internal glycosidic bonds of highly methylated pectins. The sequence is that of Probable pectin lyase F-2 (pelF-2) from Aspergillus terreus (strain NIH 2624 / FGSC A1156).